Reading from the N-terminus, the 372-residue chain is Ligninase A (372 aa).

Positions 1 to 21 (MAFKQLVAAISLALSLTTANA) are cleaved as a signal peptide. Positions 22 to 28 (AVVKEKR) are excised as a propeptide. Disulfide bonds link C31/C43, C42/C313, C62/C148, and C277/C345. H75 acts as the Proton acceptor in catalysis. Ca(2+) is bound by residues D76, G94, D96, and S98. A heme b-binding site is contributed by H204. Ca(2+) contacts are provided by S205, D222, T224, I227, and D229. N285 carries N-linked (GlcNAc...) asparagine glycosylation.

This sequence belongs to the peroxidase family. Ligninase subfamily. Heme b serves as cofactor. It depends on Ca(2+) as a cofactor.

The catalysed reaction is 1-(3,4-dimethoxyphenyl)-2-(2-methoxyphenoxy)propane-1,3-diol + H2O2 = 3,4-dimethoxybenzaldehyde + guaiacol + glycolaldehyde + H2O. It catalyses the reaction 2 (3,4-dimethoxyphenyl)methanol + H2O2 = 2 (3,4-dimethoxyphenyl)methanol radical + 2 H2O. It functions in the pathway secondary metabolite metabolism; lignin degradation. Functionally, depolymerization of lignin. Catalyzes the C(alpha)-C(beta) cleavage of the propyl side chains of lignin. The polypeptide is Ligninase A (LIPA) (Phanerodontia chrysosporium (White-rot fungus)).